Consider the following 402-residue polypeptide: Subtilisin-like protease 9 (402 aa).

A signal peptide spans 1 to 18; that stretch reads MGFFRILFSLSLCALSLA. The propeptide occupies 19–120; it reads IPSKLIGLEN…VEVDRVVKLD (102 aa). Residues 36-119 form the Inhibitor I9 domain; sequence SYIVVMKSAV…YVEVDRVVKL (84 aa). Residues 130–402 form the Peptidase S8 domain; it reads SWGLGRISHR…KKLLYNGSGA (273 aa). Catalysis depends on charge relay system residues D162 and H193. Residue N254 is glycosylated (N-linked (GlcNAc...) asparagine). S348 (charge relay system) is an active-site residue. Residues N390 and N398 are each glycosylated (N-linked (GlcNAc...) asparagine).

It belongs to the peptidase S8 family.

The protein resides in the secreted. Functionally, secreted subtilisin-like serine protease with keratinolytic activity that contributes to pathogenicity. This chain is Subtilisin-like protease 9 (SUB9), found in Arthroderma gypseum (strain ATCC MYA-4604 / CBS 118893) (Microsporum gypseum).